Reading from the N-terminus, the 180-residue chain is MASVIEKGLASICCVTTSSKPWAEGEADGDVKYEDLRGPGGRNTSGSVSDKRICVPQKIDPKTFFANERTFLKWMSISVMIGMMSLTLLNFGDTSSNASELAGLVLLPVSILFMIHSLFVFKDRANKIYMREPMRYDDTKGPTILVLVLGVSLGIAAIFSVQKQYYRTASSSFNDGPRFS.

The Cytoplasmic segment spans residues 1–70 (MASVIEKGLA…PKTFFANERT (70 aa)). The chain crosses the membrane as a helical span at residues 71–91 (FLKWMSISVMIGMMSLTLLNF). At 92–100 (GDTSSNASE) the chain is on the vacuolar side. Residues 101 to 121 (LAGLVLLPVSILFMIHSLFVF) traverse the membrane as a helical segment. Topologically, residues 122–140 (KDRANKIYMREPMRYDDTK) are cytoplasmic. A helical membrane pass occupies residues 141–161 (GPTILVLVLGVSLGIAAIFSV). Residues 162-180 (QKQYYRTASSSFNDGPRFS) are Vacuolar-facing.

Belongs to the VTC1 family. In terms of assembly, the VTC core complex is an integral membrane heterooligomer composed of at least the catalytic subunit vtc4 and the accessory subunits vtc1 and vtc2. vtc1 is a small membrane protein without hydrophilic domain. Vtc2 and vtc4 are related and have 2 hydrophilic domains that face the cytosol, an N-terminal SPX domain and the central core domain. The central core in vtc4 is the catalytic domain.

It is found in the acidocalcisome membrane. Its function is as follows. Accessory subunit of the vacuolar transporter chaperone (VTC) complex. The VTC complex acts as a vacuolar polyphosphate polymerase that catalyzes the synthesis of inorganic polyphosphate (polyP) via transfer of phosphate from ATP to a growing polyP chain, releasing ADP. VTC exposes its catalytic domain vtc4 to the cytosol, where the growing polyP chain winds through a tunnel-shaped pocket, integrating cytoplasmic polymer synthesis with polyP membrane translocation. The VTC complex carries 9 vacuolar transmembrane domains, which are likely to constitute the translocation channel into the organelle lumen. PolyP synthesis is tightly coupled to its transport into the vacuole lumen, in order to avoid otherwise toxic intermediates in the cytosol, and it depends on the proton gradient across the membrane, formed by V-ATPase. VTC1 contributes only 3 transmembrane domains to the complex. The VTC complex also plays a role in vacuolar membrane fusion. The chain is Vacuolar transporter chaperone complex subunit 1 (VTC1) from Trypanosoma brucei brucei (strain 927/4 GUTat10.1).